The following is a 328-amino-acid chain: Coiled-coil domain-containing protein 54 (328 aa).

The stretch at 122-151 forms a coiled coil; sequence TTKDILSMKEDIKALKKKVTELEKQNSYSR. Thr-182 is subject to Phosphothreonine. Over residues 186-197 the composition is skewed to basic and acidic residues; that stretch reads TDREMSSAEPEK. The disordered stretch occupies residues 186-205; the sequence is TDREMSSAEPEKVPSYPKST.

This is Coiled-coil domain-containing protein 54 (CCDC54) from Macaca fascicularis (Crab-eating macaque).